The primary structure comprises 153 residues: SsrA-binding protein (153 aa).

The segment at 131 to 153 is disordered; sequence EYDKRDSIRERDDRREMDRAFKR.

Belongs to the SmpB family.

Its subcellular location is the cytoplasm. Functionally, required for rescue of stalled ribosomes mediated by trans-translation. Binds to transfer-messenger RNA (tmRNA), required for stable association of tmRNA with ribosomes. tmRNA and SmpB together mimic tRNA shape, replacing the anticodon stem-loop with SmpB. tmRNA is encoded by the ssrA gene; the 2 termini fold to resemble tRNA(Ala) and it encodes a 'tag peptide', a short internal open reading frame. During trans-translation Ala-aminoacylated tmRNA acts like a tRNA, entering the A-site of stalled ribosomes, displacing the stalled mRNA. The ribosome then switches to translate the ORF on the tmRNA; the nascent peptide is terminated with the 'tag peptide' encoded by the tmRNA and targeted for degradation. The ribosome is freed to recommence translation, which seems to be the essential function of trans-translation. This chain is SsrA-binding protein, found in Parabacteroides distasonis (strain ATCC 8503 / DSM 20701 / CIP 104284 / JCM 5825 / NCTC 11152).